The primary structure comprises 464 residues: MEIRLPDLALKRIFSFLDLFGLLQVSQVNKHWNRIADSDYLWRSLSLQRWDCSNFTNQHLGTHTWKQFFLHQRRKELRLALAQPHNFIYKVTKNIAFETELAYLSGNRLTVDEQEKSIICSVSPKQELCAWDVQEGTMIWSSPVQEFHFSNLVTLPQMHLAITMDRKKTIKVWNCQDRDALAVLPMPQPCYCMEAYLTKDGPFLMVGDAAGDIYTFTLPGLRDVSKVTAFQYGIVLLHCSPDKKWVFACGTYSRTLPQVFLTESLLRPSEGSVPLSTFLPHKLCASACWTPKVKNRITLMSQSSTGKKTEFITFDLTTKKTGGQTVIQAYEIASFQVAAHLKCPIWMGASDGYMIVFTSGPYLLLFSITGFLLQRFEDHQAAINNFWVDPCYVLTTSENSVHVYMWEEGGRHPYLRSCCHLENTWHDHTTDSCISSVMCDNASIVLRVRKVSDSSILVMYSLNT.

Residues 1–45 (MEIRLPDLALKRIFSFLDLFGLLQVSQVNKHWNRIADSDYLWRSL) form the F-box domain. 8 WD repeats span residues 89–132 (YKVT…CAWD), 136–174 (GTMI…KVWN), 178–217 (RDAL…YTFT), 222–263 (RDVS…FLTE), 270–315 (EGSV…ITFD), 320–367 (KTGG…LLFS), 370–407 (GFLL…YMWE), and 416–461 (RSCC…VMYS).

Interacts with SKP1. Interacts with CUL1. Interacts with IL22RA1. Ubiquitously expressed.

It participates in protein modification; protein ubiquitination. Substrate-recognition component of the SCF (SKP1-CUL1-F-box protein)-type E3 ubiquitin ligase complex. Promotes degradation of interleukin-22 receptor subunit IL22RA1 in resting and IL22-stimulated conditions by facilitating its ubiquitination. Functions as a cell growth suppressor. The polypeptide is F-box/WD repeat-containing protein 12 (FBXW12) (Homo sapiens (Human)).